Reading from the N-terminus, the 102-residue chain is Integration host factor subunit alpha (102 aa).

Residues 49–70 are disordered; it reads FGNFQLRTKPQRPGRNPKTGEE.

It belongs to the bacterial histone-like protein family. As to quaternary structure, heterodimer of an alpha and a beta chain.

In terms of biological role, this protein is one of the two subunits of integration host factor, a specific DNA-binding protein that functions in genetic recombination as well as in transcriptional and translational control. The chain is Integration host factor subunit alpha from Nitrosomonas europaea (strain ATCC 19718 / CIP 103999 / KCTC 2705 / NBRC 14298).